The following is a 367-amino-acid chain: MSTFLLTWIIMTVALSVTLFLMPQQTNAARAFFVFGDSLVDSGNNNYLVTTARADSPPYGIDYPTGRPTGRFSNGLNLPDIISEQIGSEPTLPILSPELTGEKLLIGANFASAGIGILNDTGVQFLNILRIGRQFELFQEYQERVSEIIGSDKTQQLVNGALVLMTLGGNDFVNNYFFPISTRRRQSSLGEFSQLLISEYKKILTSLYELGARRVMVTGTGPLGCVPAELASSGSVNGECAPEAQQAAAIFNPLLVQMLQGLNREIGSDVFIGANAFNTNADFINNPQRFGFVTSKVACCGQGAYNGQGVCTPLSTLCSDRNAYAFWDPFHPTEKATRLIVQQIMTGSVEYMNPMNLSTIMALDSRI.

Positions Met1–Ala28 are cleaved as a signal peptide. The active-site Nucleophile is the Ser38. Asn119 is a glycosylation site (N-linked (GlcNAc...) asparagine). Residues Asp328 and His331 contribute to the active site. Asn356 carries N-linked (GlcNAc...) asparagine glycosylation.

The protein belongs to the 'GDSL' lipolytic enzyme family.

It localises to the secreted. This chain is GDSL esterase/lipase At4g28780, found in Arabidopsis thaliana (Mouse-ear cress).